Reading from the N-terminus, the 138-residue chain is Small ribosomal subunit protein uS8 (138 aa).

The protein belongs to the universal ribosomal protein uS8 family. As to quaternary structure, part of the 30S ribosomal subunit. Contacts proteins S5 and S12.

In terms of biological role, one of the primary rRNA binding proteins, it binds directly to 16S rRNA central domain where it helps coordinate assembly of the platform of the 30S subunit. The sequence is that of Small ribosomal subunit protein uS8 from Thermus aquaticus.